Here is a 40-residue protein sequence, read N- to C-terminus: Large ribosomal subunit protein bL33c (40 aa).

Belongs to the bacterial ribosomal protein bL33 family.

It localises to the plastid. The protein localises to the chloroplast. The sequence is that of Large ribosomal subunit protein bL33c (rpl33) from Pisum sativum (Garden pea).